The following is a 107-amino-acid chain: Large ribosomal subunit protein uL24 (107 aa).

The protein belongs to the universal ribosomal protein uL24 family. Part of the 50S ribosomal subunit.

Its function is as follows. One of two assembly initiator proteins, it binds directly to the 5'-end of the 23S rRNA, where it nucleates assembly of the 50S subunit. One of the proteins that surrounds the polypeptide exit tunnel on the outside of the subunit. This chain is Large ribosomal subunit protein uL24, found in Streptomyces avermitilis (strain ATCC 31267 / DSM 46492 / JCM 5070 / NBRC 14893 / NCIMB 12804 / NRRL 8165 / MA-4680).